Here is a 415-residue protein sequence, read N- to C-terminus: Carbamoyl phosphate synthase arginine-specific small chain (415 aa).

The transit peptide at 1–17 (MLRFLKPFPLRFGKRFY) directs the protein to the mitochondrion. L-glutamine-binding residues include S88, G272, and G274. The region spanning 225–412 (NIAVIDCGVK…IKEAIKYQKS (188 aa)) is the Glutamine amidotransferase type-1 domain. C301 functions as the Nucleophile in the catalytic mechanism. L-glutamine contacts are provided by M302, Q305, N343, G345, and Y346. Residues H385 and E387 contribute to the active site.

This sequence belongs to the CarA family. As to quaternary structure, heterodimer composed of 2 chains; the small (or glutamine) chain promotes the hydrolysis of glutamine to ammonia, which is used by the large (or ammonia) chain to synthesize carbamoyl phosphate.

Its subcellular location is the mitochondrion. It localises to the cytoplasm. The enzyme catalyses hydrogencarbonate + L-glutamine + 2 ATP + H2O = carbamoyl phosphate + L-glutamate + 2 ADP + phosphate + 2 H(+). It carries out the reaction L-glutamine + H2O = L-glutamate + NH4(+). It functions in the pathway amino-acid biosynthesis; L-arginine biosynthesis; carbamoyl phosphate from bicarbonate: step 1/1. Small subunit of the arginine-specific carbamoyl phosphate synthase (CPSase). CPSase catalyzes the formation of carbamoyl phosphate from the ammonia moiety of glutamine, carbonate, and phosphate donated by ATP, the first step of the arginine biosynthetic pathway. The small subunit (glutamine amidotransferase) binds and cleaves glutamine to supply the large subunit with the substrate ammonia. The sequence is that of Carbamoyl phosphate synthase arginine-specific small chain (arg5) from Schizosaccharomyces pombe (strain 972 / ATCC 24843) (Fission yeast).